Consider the following 353-residue polypeptide: tRNA-specific 2-thiouridylase MnmA 1 (353 aa).

Residues 9 to 16 (AMSGGVDS) and methionine 35 contribute to the ATP site. Residue cysteine 98 is the Nucleophile of the active site. A disulfide bridge links cysteine 98 with cysteine 194. An ATP-binding site is contributed by glycine 122. The interval 144 to 146 (KDQ) is interaction with tRNA. Cysteine 194 acts as the Cysteine persulfide intermediate in catalysis. The tract at residues 300–301 (RY) is interaction with tRNA.

This sequence belongs to the MnmA/TRMU family.

It is found in the cytoplasm. The enzyme catalyses S-sulfanyl-L-cysteinyl-[protein] + uridine(34) in tRNA + AH2 + ATP = 2-thiouridine(34) in tRNA + L-cysteinyl-[protein] + A + AMP + diphosphate + H(+). Functionally, catalyzes the 2-thiolation of uridine at the wobble position (U34) of tRNA, leading to the formation of s(2)U34. This Clostridium botulinum (strain Okra / Type B1) protein is tRNA-specific 2-thiouridylase MnmA 1.